A 403-amino-acid polypeptide reads, in one-letter code: Probable N-acetyltransferase HLS1 (403 aa).

The N-acetyltransferase domain maps to Thr2–Asn177.

This sequence belongs to the acetyltransferase family.

In terms of biological role, ethylene-responsive N-acetyltransferase required for differential cell elongation in the hypocotyl. Regulates apical hook formation of dark-grown seedlings. May control differential cell growth by regulating auxin activity. May be involved in negative feedback regulation of auxin homeostasis through the control of GH3-like genes. Modulates de novo shoot organogenesis. This is Probable N-acetyltransferase HLS1 (HLS1) from Arabidopsis thaliana (Mouse-ear cress).